The sequence spans 679 residues: Methyl-accepting chemotaxis protein McpB (679 aa).

Divergent domain HAMP stretches follow at residues 8 to 56 (AVAQ…RQLR), 63 to 112 (QQVE…AAHI), and 111 to 156 (HIAV…ERLR). The 43-residue stretch at 171–213 (YNARIKSALDNVSANVMIADNDLNIIYMNRTVSEMLGRAEADI) folds into the PAS domain. Heme is bound at residue H234. Positions 285–287 (DRT) match the DxT. Important for signal propagation motif. Residues 289–332 (EHRAEQEVSQLVQAAAAGDFSKRVEEAGKEGFFLRLAKDLNSLV) are divergent domain HAMP 4. An HAMP 5 domain is found at 333 to 385 (DTADRGLRDVSRMLGALAQGDLTQRIEADYQGTFGQLKDFSNDTAQSLSRMLG). One can recognise a Methyl-accepting transducer domain in the interval 390–619 (AADTINTAAS…EAAAAAEAMQ (230 aa)). Disordered stretches follow at residues 405 to 425 (NAEL…TASS) and 644 to 679 (ASAR…WEEF). Residues 411–425 (RTEQQASSLEETASS) show a composition bias toward polar residues. Positions 670–679 (ARKEDGWEEF) are enriched in basic and acidic residues. Residues 675–679 (GWEEF) carry the GWEEF pentapeptide. Important for methylation by CheR2 motif.

It belongs to the methyl-accepting chemotaxis (MCP) protein family. Homodimer. The PAS domains form dimers in the presence and absence of oxygen. Interacts with the methyltransferase CheR2 via the C-terminal McpB pentapeptide GWEEF. Interacts with the methylesterase/gutaminase CheB2, which also binds to the GWEEF pentapeptide. Post-translationally, methylated by CheR2, but not by CheR1, CheR3 or WspC. Demethylated by CheB2. In vitro, can be methylated by E.coli CheR.

Its subcellular location is the cytoplasm. Chemoreceptor that plays a critical role in the virulence and pathogenesis of P.aeruginosa in a variety of hosts. Probably acts through oxygen sensing. Uses a heme-based sensor. Could be involved in chemotaxis. When expressed in E.coli, is able to sense and mediate repellent responses to oxygen, carbon monoxide and nitric oxide. The chain is Methyl-accepting chemotaxis protein McpB from Pseudomonas aeruginosa (strain ATCC 15692 / DSM 22644 / CIP 104116 / JCM 14847 / LMG 12228 / 1C / PRS 101 / PAO1).